Consider the following 503-residue polypeptide: tRNA-2-methylthio-N(6)-dimethylallyladenosine synthase (503 aa).

The MTTase N-terminal domain occupies 5–121; the sequence is RSYEIRTFGC…LPVLLERARH (117 aa). Residues C14, C50, C84, C158, C162, and C165 each coordinate [4Fe-4S] cluster. The Radical SAM core domain maps to 144 to 380; the sequence is RESAYAGWVS…IALQEEISLA (237 aa). In terms of domain architecture, TRAM spans 383 to 453; the sequence is RELIGTEVEL…PHHLIADAPV (71 aa).

The protein belongs to the methylthiotransferase family. MiaB subfamily. Monomer. The cofactor is [4Fe-4S] cluster.

It is found in the cytoplasm. It carries out the reaction N(6)-dimethylallyladenosine(37) in tRNA + (sulfur carrier)-SH + AH2 + 2 S-adenosyl-L-methionine = 2-methylsulfanyl-N(6)-dimethylallyladenosine(37) in tRNA + (sulfur carrier)-H + 5'-deoxyadenosine + L-methionine + A + S-adenosyl-L-homocysteine + 2 H(+). Catalyzes the methylthiolation of N6-(dimethylallyl)adenosine (i(6)A), leading to the formation of 2-methylthio-N6-(dimethylallyl)adenosine (ms(2)i(6)A) at position 37 in tRNAs that read codons beginning with uridine. The protein is tRNA-2-methylthio-N(6)-dimethylallyladenosine synthase of Nocardia farcinica (strain IFM 10152).